Reading from the N-terminus, the 140-residue chain is Large ribosomal subunit protein uL15 (140 aa).

A disordered region spans residues 1–31; that stretch reads MDTKKFRGSRTCGGGTHKNRRGAGNRGGRGK.

It belongs to the universal ribosomal protein uL15 family. Part of the 50S ribosomal subunit.

Binds to the 23S rRNA. The protein is Large ribosomal subunit protein uL15 of Methanosarcina barkeri (strain Fusaro / DSM 804).